A 284-amino-acid chain; its full sequence is Nucleotide-binding protein VSAL_I0495 (284 aa).

8 to 15 (GNSGAGKS) serves as a coordination point for ATP. 56–59 (DIRN) is a GTP binding site.

Belongs to the RapZ-like family.

Its function is as follows. Displays ATPase and GTPase activities. This chain is Nucleotide-binding protein VSAL_I0495, found in Aliivibrio salmonicida (strain LFI1238) (Vibrio salmonicida (strain LFI1238)).